Reading from the N-terminus, the 201-residue chain is Peptide deformylase (201 aa).

Fe cation contacts are provided by C114 and H156. The active site involves E157. Position 160 (H160) interacts with Fe cation.

This sequence belongs to the polypeptide deformylase family. Requires Fe(2+) as cofactor.

The enzyme catalyses N-terminal N-formyl-L-methionyl-[peptide] + H2O = N-terminal L-methionyl-[peptide] + formate. In terms of biological role, removes the formyl group from the N-terminal Met of newly synthesized proteins. Requires at least a dipeptide for an efficient rate of reaction. N-terminal L-methionine is a prerequisite for activity but the enzyme has broad specificity at other positions. In Tropheryma whipplei (strain TW08/27) (Whipple's bacillus), this protein is Peptide deformylase.